The following is a 274-amino-acid chain: Undecaprenyl-diphosphatase (274 aa).

The next 6 helical transmembrane spans lie at 44 to 64 (AKVF…LVYW), 85 to 105 (LNVV…GKMI), 109 to 129 (LFIP…ILWA), 185 to 205 (ATDF…AYSL), 214 to 234 (VADI…AWLC), and 247 to 267 (FIPF…TAWT).

Belongs to the UppP family.

The protein resides in the cell inner membrane. It carries out the reaction di-trans,octa-cis-undecaprenyl diphosphate + H2O = di-trans,octa-cis-undecaprenyl phosphate + phosphate + H(+). Its function is as follows. Catalyzes the dephosphorylation of undecaprenyl diphosphate (UPP). Confers resistance to bacitracin. The protein is Undecaprenyl-diphosphatase of Variovorax paradoxus (strain S110).